A 288-amino-acid polypeptide reads, in one-letter code: 33 kDa chaperonin (288 aa).

2 cysteine pairs are disulfide-bonded: Cys237–Cys239 and Cys270–Cys273.

It belongs to the HSP33 family. Post-translationally, under oxidizing conditions two disulfide bonds are formed involving the reactive cysteines. Under reducing conditions zinc is bound to the reactive cysteines and the protein is inactive.

It is found in the cytoplasm. In terms of biological role, redox regulated molecular chaperone. Protects both thermally unfolding and oxidatively damaged proteins from irreversible aggregation. Plays an important role in the bacterial defense system toward oxidative stress. The protein is 33 kDa chaperonin of Agathobacter rectalis (strain ATCC 33656 / DSM 3377 / JCM 17463 / KCTC 5835 / VPI 0990) (Eubacterium rectale).